The primary structure comprises 558 residues: T-complex protein 1 subunit eta (558 aa).

The interval 524–558 is disordered; that stretch reads VRNPKSEQPKAPPGGLRRGGPQGMAGLAKNARLGK.

The protein belongs to the TCP-1 chaperonin family. Heterooligomeric complex of about 850 to 900 kDa that forms two stacked rings, 12 to 16 nm in diameter.

It localises to the cytoplasm. In terms of biological role, molecular chaperone; assists the folding of proteins upon ATP hydrolysis. Known to play a role, in vitro, in the folding of actin and tubulin. In Tetrahymena pyriformis, this protein is T-complex protein 1 subunit eta.